The chain runs to 154 residues: Major allergen Api g 1, isoallergen 1 (154 aa).

The protein belongs to the BetVI family.

In Apium graveolens (Celery), this protein is Major allergen Api g 1, isoallergen 1.